The following is a 456-amino-acid chain: Signal recognition particle receptor FtsY (456 aa).

Residues 1–26 (MFDGLKKKLNRFRNDVEETAEEKAEA) show a composition bias toward basic and acidic residues. The segment at 1–163 (MFDGLKKKLN…DEDDSSGPGR (163 aa)) is disordered. Residues 27–39 (AADEAESDADAEA) show a composition bias toward acidic residues. The segment covering 40–62 (ESAPADTDNAAVEPEASEPAAAD) has biased composition (low complexity). Over residues 63–81 (PDADAVGDADAGSEADAVD) the composition is skewed to acidic residues. Residues 82–97 (AADAPADAESSSAAVE) show a composition bias toward low complexity. The segment covering 112–134 (PDSEVDAGADTGDEPSGEPTADE) has biased composition (acidic residues). GTP is bound by residues 265-272 (GINGVGKT), 347-351 (DTAGR), and 405-408 (TKAD).

Belongs to the GTP-binding SRP family. FtsY subfamily. Part of the signal recognition particle protein translocation system, which is composed of SRP and FtsY.

The protein localises to the cell membrane. The protein resides in the cytoplasm. The enzyme catalyses GTP + H2O = GDP + phosphate + H(+). Involved in targeting and insertion of nascent membrane proteins into the cytoplasmic membrane. Acts as a receptor for the complex formed by the signal recognition particle (SRP) and the ribosome-nascent chain (RNC). This is Signal recognition particle receptor FtsY from Haloferax volcanii (strain ATCC 29605 / DSM 3757 / JCM 8879 / NBRC 14742 / NCIMB 2012 / VKM B-1768 / DS2) (Halobacterium volcanii).